A 467-amino-acid chain; its full sequence is MRNVELIFIPTPTVGHLVPFLEFARRLIEQDDRIRITILLMKLQGQSHLDTYVKSIASSQPFVRFIDVPELEEKPTLGSTQSVEAYVYDVIERNIPLVRNIVMDILTSLALDGVKVKGLVVDFFCLPMIDVAKDISLPFYVFLTTNSGFLAMMQYLADRHSRDTSVFVRNSEEMLSIPGFVNPVPANVLPSALFVEDGYDAYVKLAILFTKANGILVNSSFDIEPYSVNHFLQEQNYPSVYAVGPIFDLKAQPHPEQDLTRRDELMKWLDDQPEASVVFLCFGSMARLRGSLVKEIAHGLELCQYRFLWSLRKEEVTKDDLPEGFLDRVDGRGMICGWSPQVEILAHKAVGGFVSHCGWNSIVESLWFGVPIVTWPMYAEQQLNAFLMVKELKLAVELKLDYRVHSDEIVNANEIETAIRYVMDTDNNVVRKRVMDISQMIQRATKNGGSSFAAIEKFIYDVIGIKP.

His16 serves as the catalytic Proton acceptor. An anthocyanidin is bound at residue His16. Asp122 functions as the Charge relay in the catalytic mechanism. The UDP-alpha-D-glucose site is built by Thr144, Gln341, His356, Trp359, Asn360, Ser361, and Glu364. Ala379 lines the an anthocyanidin pocket. Residues Glu380 and Gln381 each coordinate UDP-alpha-D-glucose.

Belongs to the UDP-glycosyltransferase family.

It catalyses the reaction a flavonol + UDP-alpha-D-glucose = a flavonol 3-O-beta-D-glucoside + UDP + H(+). Its function is as follows. Possesses quercetin 3-O-glucosyltransferase activity in vitro. The protein is UDP-glycosyltransferase 71D1 (UGT71D1) of Arabidopsis thaliana (Mouse-ear cress).